Consider the following 448-residue polypeptide: MPLDLYNTLTRRKERFEPMTPDRVGMYVCGPTVYDTAHIGNARPVVFDLLFRLLRRLYPAVTYVRNITASDDKIIDRRATTGADRGADQAHRGPLPRRHGPLNAAPTIEPRATHHISHMVALIGLLIEPATPTPRKGTCCSPCRRWRSTGQLSRRSLDEMIAGARVEVAPYKRDSSDFVLWKPSTDGQPGWDSPWGRGRPGWHIECSAMAKEHLGVTFDIHGGGLDLILPDHENEIAQSRCAHAGEPLARYWVHQRLRDRRGARRMSKSLGNLLHRGTSCWTEFPGGGHPLGVRPYRSRGLPEAEESKATLDRWYQALRGDPAPAQAELPFDVLAALEDDLNSPLAISHLHELASAVNKATGEAEKAAAKGRCRSAERWAAPETRSVVPLGAEGAAALSDADIQQRIEDRSAARKAKNYAEADRIRKELADLGIVLEDGPQGTTWKRA.

Cys-29 is a binding site for Zn(2+). The 'HIGH' region motif lies at 31-41 (PTVYDTAHIGN). A compositionally biased stretch (basic and acidic residues) spans 79-91 (ATTGADRGADQAH). The segment at 79–106 (ATTGADRGADQAHRGPLPRRHGPLNAAP) is disordered. Positions 206 and 235 each coordinate Zn(2+). The 'KMSKS' region motif lies at 265–269 (RMSKS). An ATP-binding site is contributed by Lys-268.

This sequence belongs to the class-I aminoacyl-tRNA synthetase family. In terms of assembly, monomer. Zn(2+) serves as cofactor.

The protein resides in the cytoplasm. It carries out the reaction tRNA(Cys) + L-cysteine + ATP = L-cysteinyl-tRNA(Cys) + AMP + diphosphate. The polypeptide is Cysteine--tRNA ligase (cysS) (Azospirillum brasilense).